Consider the following 578-residue polypeptide: E3 ubiquitin-protein ligase hrd-like protein 1 (578 aa).

Residues 32 to 52 (GYLALSLCVAFIASASVFTHF) form a helical membrane-spanning segment. The N-linked (GlcNAc...) asparagine glycan is linked to Asn68. The next 7 membrane-spanning stretches (helical) occupy residues 76 to 96 (FGIN…HYIL), 101 to 121 (LIWV…KLII), 134 to 154 (VAAR…LSVV), 163 to 183 (VMPW…QFVT), 202 to 222 (SFIS…VSRF), 230 to 250 (PAVL…YILF), and 286 to 306 (FLSY…SIFF). The RING-type; atypical zinc-finger motif lies at 350 to 388 (CIVCWELLGTSRRLPCSHQFHDWCLMWWLAQDSSCPTCR). The CUE domain occupies 447–489 (QLQSMLETVLEMFPQMSPETILADLRQSGSAQSTIENILEGRM). An N-linked (GlcNAc...) asparagine glycan is attached at Asn492.

The protein localises to the membrane. Functionally, proposed to have a role in neuroprotection. The chain is E3 ubiquitin-protein ligase hrd-like protein 1 from Caenorhabditis briggsae.